The sequence spans 949 residues: Translation initiation factor IF-2 (949 aa).

Disordered stretches follow at residues 50–206 and 220–359; these read FTEK…GAAR and QNAE…TERK. 2 stretches are compositionally biased toward basic and acidic residues: residues 52–84 and 104–143; these read EKPKTETKPKIKAVDETPKPKLEAVKEEVKVEK and FKAEREARAKEQAARQKRNAQESTERRQDNRYQQKNDQGS. 2 stretches are compositionally biased toward polar residues: residues 144–154 and 164–180; these read KNRNFNKSQGQ and GSQQNNRQDSRIASNKP. Residues 187–206 are compositionally biased toward low complexity; sequence NAANRNQNNSQQERQVGAAR. Residues 224 to 275 are compositionally biased toward basic and acidic residues; sequence YMRHKETQLREQEEARRLAERAKEEARLAAQKAAEEKAKEAEKAAKTERFEP. Low complexity predominate over residues 319–336; that stretch reads KSWNNQNQVRNQRNSNWN. Residues 450–619 enclose the tr-type G domain; that stretch reads ERAPVVTIMG…LLVAEVEELK (170 aa). Residues 459-466 are G1; the sequence is GHVDHGKT. Residue 459-466 coordinates GTP; that stretch reads GHVDHGKT. Residues 484-488 are G2; the sequence is GITQH. The interval 505–508 is G3; it reads DTPG. GTP contacts are provided by residues 505 to 509 and 559 to 562; these read DTPGH and NKID. Residues 559-562 are G4; sequence NKID. The tract at residues 595–597 is G5; sequence SAK.

Belongs to the TRAFAC class translation factor GTPase superfamily. Classic translation factor GTPase family. IF-2 subfamily.

It localises to the cytoplasm. One of the essential components for the initiation of protein synthesis. Protects formylmethionyl-tRNA from spontaneous hydrolysis and promotes its binding to the 30S ribosomal subunits. Also involved in the hydrolysis of GTP during the formation of the 70S ribosomal complex. The protein is Translation initiation factor IF-2 of Streptococcus uberis (strain ATCC BAA-854 / 0140J).